Reading from the N-terminus, the 97-residue chain is MINNYFFAILLQDKISKNWAIGLILISICLAILLIVSIFVIKKIKQKNQHNRAISFSIDTNKSNDKRFWISFSLICCYLTCFVLSVAFLIIGIIALI.

This is an uncharacterized protein from Mycoplasma capricolum subsp. capricolum (strain California kid / ATCC 27343 / NCTC 10154).